Here is a 338-residue protein sequence, read N- to C-terminus: RNA 3'-terminal phosphate cyclase (338 aa).

ATP-binding positions include Q103 and 283–287; that span reads YLADQ. H308 acts as the Tele-AMP-histidine intermediate in catalysis.

It belongs to the RNA 3'-terminal cyclase family. Type 1 subfamily.

The protein resides in the cytoplasm. It catalyses the reaction a 3'-end 3'-phospho-ribonucleotide-RNA + ATP = a 3'-end 2',3'-cyclophospho-ribonucleotide-RNA + AMP + diphosphate. Functionally, catalyzes the conversion of 3'-phosphate to a 2',3'-cyclic phosphodiester at the end of RNA. The mechanism of action of the enzyme occurs in 3 steps: (A) adenylation of the enzyme by ATP; (B) transfer of adenylate to an RNA-N3'P to produce RNA-N3'PP5'A; (C) and attack of the adjacent 2'-hydroxyl on the 3'-phosphorus in the diester linkage to produce the cyclic end product. The biological role of this enzyme is unknown but it is likely to function in some aspects of cellular RNA processing. This chain is RNA 3'-terminal phosphate cyclase, found in Shigella sonnei (strain Ss046).